The chain runs to 300 residues: tRNA pseudouridine synthase B (300 aa).

The Nucleophile role is filled by D44.

It belongs to the pseudouridine synthase TruB family. Type 1 subfamily.

It catalyses the reaction uridine(55) in tRNA = pseudouridine(55) in tRNA. In terms of biological role, responsible for synthesis of pseudouridine from uracil-55 in the psi GC loop of transfer RNAs. The chain is tRNA pseudouridine synthase B from Corynebacterium diphtheriae (strain ATCC 700971 / NCTC 13129 / Biotype gravis).